Reading from the N-terminus, the 310-residue chain is Acetyl-coenzyme A carboxylase carboxyl transferase subunit alpha (310 aa).

Positions 36–286 (NLEKEITKTY…GEYILKQLDE (251 aa)) constitute a CoA carboxyltransferase C-terminal domain.

Belongs to the AccA family. Acetyl-CoA carboxylase is a heterohexamer composed of biotin carboxyl carrier protein (AccB), biotin carboxylase (AccC) and two subunits each of ACCase subunit alpha (AccA) and ACCase subunit beta (AccD).

Its subcellular location is the cytoplasm. It catalyses the reaction N(6)-carboxybiotinyl-L-lysyl-[protein] + acetyl-CoA = N(6)-biotinyl-L-lysyl-[protein] + malonyl-CoA. The protein operates within lipid metabolism; malonyl-CoA biosynthesis; malonyl-CoA from acetyl-CoA: step 1/1. Its function is as follows. Component of the acetyl coenzyme A carboxylase (ACC) complex. First, biotin carboxylase catalyzes the carboxylation of biotin on its carrier protein (BCCP) and then the CO(2) group is transferred by the carboxyltransferase to acetyl-CoA to form malonyl-CoA. The chain is Acetyl-coenzyme A carboxylase carboxyl transferase subunit alpha from Campylobacter fetus subsp. fetus (strain 82-40).